The primary structure comprises 103 residues: MDPGTTGIVGGVSEAKPATPEIQEVADKVKRQLEEKTNEKYEKFKVVEYKSQVVAGQILFMKVDVGNGRFLHMKVLRGLSGDDDLKLLDYQTNKTKNDELTDF.

Residue Met-1 is modified to N-acetylmethionine. Positions Gln-52–Gly-56 match the Secondary area of contact motif.

It belongs to the cystatin family.

It is found in the cytoplasm. Its function is as follows. This is an intracellular thiol proteinase inhibitor. In Rattus norvegicus (Rat), this protein is Cystatin-A (Csta).